Here is a 304-residue protein sequence, read N- to C-terminus: Acetylglutamate kinase (304 aa).

Residues 64 to 65 (GG), arginine 86, and asparagine 181 each bind substrate.

It belongs to the acetylglutamate kinase family. ArgB subfamily.

It is found in the plastid. It localises to the chloroplast. The enzyme catalyses N-acetyl-L-glutamate + ATP = N-acetyl-L-glutamyl 5-phosphate + ADP. The protein operates within amino-acid biosynthesis; L-arginine biosynthesis; N(2)-acetyl-L-ornithine from L-glutamate: step 2/4. In terms of biological role, catalyzes the ATP-dependent phosphorylation of N-acetyl-L-glutamate. In Cyanidium caldarium (Red alga), this protein is Acetylglutamate kinase.